We begin with the raw amino-acid sequence, 1056 residues long: ATP-dependent helicase wrn-1 (1056 aa).

The disordered stretch occupies residues 1-102 (MISDDDDLPS…SSSDDSDQGD (102 aa)). Tandem repeats lie at residues 17–26 (NEELPETEPE) and 28–37 (NDELPETEPE). Positions 17–37 (NEELPETEPEDNDELPETEPE) are 2 X 10 AA repeats of N-[ED]-E-L-P-E-T-E-P-E. Over residues 19 to 38 (ELPETEPEDNDELPETEPES) the composition is skewed to acidic residues. Residues 43–53 (PTVTSNKTENQ) show a composition bias toward polar residues. Positions 54–63 (VADEDYDSFD) are enriched in acidic residues. Residues 236–406 (VRNVLGGKDQ…IANLRLRKPL (171 aa)) enclose the Helicase ATP-binding domain. Residue 249 to 256 (MSTGYGKS) participates in ATP binding. The short motif at 348–351 (DEAH) is the DEAH box element. One can recognise a Helicase C-terminal domain in the interval 427–583 (MAEDLGLFMK…NLTMMLRQLE (157 aa)). Residues C591, C614, C615, and C618 each contribute to the Zn(2+) site. Positions 749–771 (KEKAAPSTVPGASRSQSTKSSTE) are disordered. The span at 761–771 (SRSQSTKSSTE) shows a compositional bias: polar residues. In terms of domain architecture, HRDC spans 806-886 (PEKIDQLRSR…VQFSKETGIA (81 aa)). Positions 1018–1056 (QEKPDIQSMPSTSNPSTIKTVPSTPSSSLRAPPLKKFKL) are disordered. Residues 1025-1046 (SMPSTSNPSTIKTVPSTPSSSL) are compositionally biased toward polar residues.

This sequence belongs to the helicase family. RecQ subfamily. It depends on Zn(2+) as a cofactor.

The protein localises to the nucleus. It carries out the reaction Couples ATP hydrolysis with the unwinding of duplex DNA by translocating in the 3'-5' direction.. It catalyses the reaction ATP + H2O = ADP + phosphate + H(+). Essential for the formation of DNA replication focal centers; stably associates with foci elements generating binding sites for RP-A. Exhibits a magnesium-dependent ATP-dependent 3'-5' DNA-helicase activity. May be involved in the control of genomic stability. In Caenorhabditis elegans, this protein is ATP-dependent helicase wrn-1 (wrn-1).